Consider the following 224-residue polypeptide: MHPQELAKFIDHTALTAEKTAQDIIKLCDEAIENQFWSVCINPCYIPLAKEKLAATNVKICTVIGFPLGANLTSVKAFEAQESIKAGAQEIDMVINVGWIKSGEWDKVRSDIQAVLQACNGTLLKVILETCLLTPDEIVKACEICRDLKVGFVKTSTGFNKDGATVEDVALMRQTVGDKLGVKASGGIRDTETAMAMINAGATRIGASAGIAIIKGLQDNSGGY.

Catalysis depends on Asp92, which acts as the Proton donor/acceptor. Lys154 acts as the Schiff-base intermediate with acetaldehyde in catalysis. The active-site Proton donor/acceptor is Lys183.

It belongs to the DeoC/FbaB aldolase family. DeoC type 1 subfamily.

It localises to the cytoplasm. The enzyme catalyses 2-deoxy-D-ribose 5-phosphate = D-glyceraldehyde 3-phosphate + acetaldehyde. It functions in the pathway carbohydrate degradation; 2-deoxy-D-ribose 1-phosphate degradation; D-glyceraldehyde 3-phosphate and acetaldehyde from 2-deoxy-alpha-D-ribose 1-phosphate: step 2/2. In terms of biological role, catalyzes a reversible aldol reaction between acetaldehyde and D-glyceraldehyde 3-phosphate to generate 2-deoxy-D-ribose 5-phosphate. The protein is Deoxyribose-phosphate aldolase of Mannheimia succiniciproducens (strain KCTC 0769BP / MBEL55E).